We begin with the raw amino-acid sequence, 303 residues long: Major fimbrium anchoring subunit FimB (303 aa).

Positions 1–22 (MNDAKKYIVSVLILLVAGMFGG) are cleaved as a signal peptide. C23 is lipidated: N-palmitoyl cysteine. C23 is lipidated: S-diacylglycerol cysteine.

It belongs to the bacteroidetes fimbrillin superfamily. FimB/Mfa2 family. As to quaternary structure, fimB is not part of the fimbrium itself, but anchors the fimbrium in the outer membrane. Linear, head-to-tail oligomerization of fimbrial subunits mediates assembly of the fimbrium stalk, while the minor components FimC, FimD and FimE probably form the fimbrium tip. The anchoring subunit FimB limits fimbrium length and is important for solid fimbrium attachment to the outer membrane. In its absence, the major fimbriae become very long and are easily detached from the membrane.

Its subcellular location is the cell outer membrane. Anchoring subunit of the major fimbriae. Regulates fimbrial length. These filamentous pili are attached to the cell surface; they mediate biofilm formation, adhesion onto host cells and onto other bacteria that are part of the oral microbiome. Fimbriae of P.gingivalis are major virulence factors. This is Major fimbrium anchoring subunit FimB from Porphyromonas gingivalis (strain ATCC BAA-308 / W83).